The sequence spans 689 residues: Glycine--tRNA ligase beta subunit (689 aa).

This sequence belongs to the class-II aminoacyl-tRNA synthetase family. Tetramer of two alpha and two beta subunits.

It localises to the cytoplasm. It carries out the reaction tRNA(Gly) + glycine + ATP = glycyl-tRNA(Gly) + AMP + diphosphate. This chain is Glycine--tRNA ligase beta subunit, found in Shigella boydii serotype 18 (strain CDC 3083-94 / BS512).